Reading from the N-terminus, the 283-residue chain is Digeranylgeranylglyceryl phosphate synthase (283 aa).

A run of 8 helical transmembrane segments spans residues 5-27 (VEII…AILA), 37-57 (AMLA…YFDY), 85-105 (LLFI…DTWI), 128-148 (PLIG…FAGY), 152-172 (EGLI…MTTA), 203-223 (AIIA…LYIY), 228-248 (INYL…AVLL), and 263-283 (LKTG…TITF).

Belongs to the UbiA prenyltransferase family. DGGGP synthase subfamily. Mg(2+) is required as a cofactor.

The protein localises to the cell membrane. The catalysed reaction is sn-3-O-(geranylgeranyl)glycerol 1-phosphate + (2E,6E,10E)-geranylgeranyl diphosphate = 2,3-bis-O-(geranylgeranyl)-sn-glycerol 1-phosphate + diphosphate. Its pathway is membrane lipid metabolism; glycerophospholipid metabolism. Functionally, prenyltransferase that catalyzes the transfer of the geranylgeranyl moiety of geranylgeranyl diphosphate (GGPP) to the C2 hydroxyl of (S)-3-O-geranylgeranylglyceryl phosphate (GGGP). This reaction is the second ether-bond-formation step in the biosynthesis of archaeal membrane lipids. This Methanobrevibacter smithii (strain ATCC 35061 / DSM 861 / OCM 144 / PS) protein is Digeranylgeranylglyceryl phosphate synthase.